The chain runs to 207 residues: Elongation factor 1-beta (207 aa).

At Ala-2 the chain carries N-acetylalanine. A disordered region spans residues 70–96 (FPGIPTSASKEEDDDVDLFGSDEEDEE). Residues 80 to 96 (EEDDDVDLFGSDEEDEE) are compositionally biased toward acidic residues. The residue at position 90 (Ser-90) is a Phosphoserine; by CK2.

This sequence belongs to the EF-1-beta/EF-1-delta family. EF-1 is composed of 4 subunits: alpha, beta, delta, and gamma. In terms of processing, phosphorylation affects the GDP/GTP exchange rate.

In terms of biological role, EF-1-beta and EF-1-delta stimulate the exchange of GDP bound to EF-1-alpha to GTP. This chain is Elongation factor 1-beta, found in Artemia salina (Brine shrimp).